The sequence spans 343 residues: N-acetyl-gamma-glutamyl-phosphate reductase (343 aa).

Cys-149 is a catalytic residue.

Belongs to the NAGSA dehydrogenase family. Type 1 subfamily.

It is found in the cytoplasm. The enzyme catalyses N-acetyl-L-glutamate 5-semialdehyde + phosphate + NADP(+) = N-acetyl-L-glutamyl 5-phosphate + NADPH + H(+). Its pathway is amino-acid biosynthesis; L-arginine biosynthesis; N(2)-acetyl-L-ornithine from L-glutamate: step 3/4. Catalyzes the NADPH-dependent reduction of N-acetyl-5-glutamyl phosphate to yield N-acetyl-L-glutamate 5-semialdehyde. The protein is N-acetyl-gamma-glutamyl-phosphate reductase of Methanococcus maripaludis (strain C6 / ATCC BAA-1332).